The chain runs to 316 residues: Coproporphyrin III ferrochelatase (316 aa).

Residues tyrosine 13, arginine 30, 46–47 (RY), serine 54, and tyrosine 125 contribute to the Fe-coproporphyrin III site. Fe(2+)-binding residues include histidine 183 and glutamate 264.

This sequence belongs to the ferrochelatase family.

Its subcellular location is the cytoplasm. The enzyme catalyses Fe-coproporphyrin III + 2 H(+) = coproporphyrin III + Fe(2+). The protein operates within porphyrin-containing compound metabolism; protoheme biosynthesis. In terms of biological role, involved in coproporphyrin-dependent heme b biosynthesis. Catalyzes the insertion of ferrous iron into coproporphyrin III to form Fe-coproporphyrin III. This Geobacillus thermodenitrificans (strain NG80-2) protein is Coproporphyrin III ferrochelatase.